We begin with the raw amino-acid sequence, 247 residues long: Large ribosomal subunit protein uL30 (247 aa).

Methionine 1 carries the post-translational modification N-acetylmethionine. 4 tandem repeats follow at residues 7–17, 18–29, 30–41, and 42–53. The tract at residues 7–53 is 4 X 12 AA tandem repeats; that stretch reads KKKVPAVPETLKKKRRNFAELKIKRLRKKFAQKMLRKARRKLIYEKA. Threonine 16 carries the post-translational modification Phosphothreonine. Lysine 123 carries the post-translational modification N6-acetyllysine. Lysine 126 is subject to N6-succinyllysine. Tyrosine 138 carries the post-translational modification Phosphotyrosine.

This sequence belongs to the universal ribosomal protein uL30 family. In terms of assembly, component of the large ribosomal subunit. Homodimer. Interacts with DHX33.

Its subcellular location is the cytoplasm. Component of the large ribosomal subunit. The ribosome is a large ribonucleoprotein complex responsible for the synthesis of proteins in the cell. Binds to G-rich structures in 28S rRNA and in mRNAs. Plays a regulatory role in the translation apparatus; inhibits cell-free translation of mRNAs. The protein is Large ribosomal subunit protein uL30 (RPL7) of Macaca fascicularis (Crab-eating macaque).